Here is a 65-residue protein sequence, read N- to C-terminus: MDASRASQLINSKASYVYCKGKPVIIKSVDESSKMATVQSVDNGATMIAPLNDIRESGVINNQNS.

This sequence belongs to the SspH family.

It is found in the spore core. This is Small, acid-soluble spore protein H 1 from Clostridium botulinum (strain Langeland / NCTC 10281 / Type F).